Reading from the N-terminus, the 421-residue chain is Ribulose bisphosphate carboxylase large chain (421 aa).

Asn68 and Thr118 together coordinate substrate. Lys120 serves as the catalytic Proton acceptor. Position 122 (Lys122) interacts with substrate. Mg(2+)-binding residues include Lys146, Asp148, and Glu149. Position 146 is an N6-carboxylysine (Lys146). Catalysis depends on His239, which acts as the Proton acceptor. Residues Arg240, His272, and Ser324 each contribute to the substrate site.

The protein belongs to the RuBisCO large chain family. Type I subfamily. In terms of assembly, heterohexadecamer of 8 large chains and 8 small chains; disulfide-linked. The disulfide link is formed within the large subunit homodimers. Requires Mg(2+) as cofactor. The disulfide bond which can form in the large chain dimeric partners within the hexadecamer appears to be associated with oxidative stress and protein turnover.

Its subcellular location is the plastid. It is found in the chloroplast. The catalysed reaction is 2 (2R)-3-phosphoglycerate + 2 H(+) = D-ribulose 1,5-bisphosphate + CO2 + H2O. The enzyme catalyses D-ribulose 1,5-bisphosphate + O2 = 2-phosphoglycolate + (2R)-3-phosphoglycerate + 2 H(+). RuBisCO catalyzes two reactions: the carboxylation of D-ribulose 1,5-bisphosphate, the primary event in carbon dioxide fixation, as well as the oxidative fragmentation of the pentose substrate in the photorespiration process. Both reactions occur simultaneously and in competition at the same active site. In Aegilops tauschii (Tausch's goatgrass), this protein is Ribulose bisphosphate carboxylase large chain (rbcL).